Reading from the N-terminus, the 128-residue chain is Calcitonin gene-related peptide 1 (128 aa).

A signal peptide spans 1-25 (MGLWKSSPFLAFSILVLCQAGGLQA). Positions 26–80 (APFRSALEGLPDPTALSEKEGRLLLAALVKAYVQRKNELEQEQEQETEGSSITAQ) are excised as a propeptide. Residues 63–83 (ELEQEQEQETEGSSITAQKRS) form a disordered region. A compositionally biased stretch (polar residues) spans 74–83 (GSSITAQKRS). A disulfide bond links cysteine 84 and cysteine 89. Phenylalanine 119 carries the post-translational modification Phenylalanine amide. Positions 125–128 (DLRA) are excised as a propeptide.

This sequence belongs to the calcitonin family.

Its subcellular location is the secreted. CGRP1/CALCA is a peptide hormone that induces vasodilation mediated by the CALCRL-RAMP1 receptor complex. Dilates a variety of vessels including the coronary, cerebral and systemic vasculature. Its abundance in the CNS also points toward a neurotransmitter or neuromodulator role. It also elevates platelet cAMP. CGRP1 can also bind and activate CALCR-RAMP1 (AMYR1) receptor complex. The chain is Calcitonin gene-related peptide 1 (CALCA) from Canis lupus familiaris (Dog).